We begin with the raw amino-acid sequence, 198 residues long: Recombination protein RecR (198 aa).

The segment at 57–72 (CSICGNLTDDDPCHIC) adopts a C4-type zinc-finger fold. Positions 80–175 (EIILVVEDSK…KVTRLARGLA (96 aa)) constitute a Toprim domain.

The protein belongs to the RecR family.

May play a role in DNA repair. It seems to be involved in an RecBC-independent recombinational process of DNA repair. It may act with RecF and RecO. The polypeptide is Recombination protein RecR (Streptococcus equi subsp. equi (strain 4047)).